The sequence spans 103 residues: Cell division protein FtsB (103 aa).

Residues M1–K3 lie on the Cytoplasmic side of the membrane. A helical transmembrane segment spans residues L4–F21. At G22–R103 the chain is on the periplasmic side. The stretch at R31–A71 forms a coiled coil.

Belongs to the FtsB family. In terms of assembly, part of a complex composed of FtsB, FtsL and FtsQ.

It is found in the cell inner membrane. Functionally, essential cell division protein. May link together the upstream cell division proteins, which are predominantly cytoplasmic, with the downstream cell division proteins, which are predominantly periplasmic. This is Cell division protein FtsB from Escherichia fergusonii (strain ATCC 35469 / DSM 13698 / CCUG 18766 / IAM 14443 / JCM 21226 / LMG 7866 / NBRC 102419 / NCTC 12128 / CDC 0568-73).